Consider the following 1097-residue polypeptide: Putative regulator of nonsense transcripts 1 (1097 aa).

The segment covering 42–53 (SQTQTQGHTQSQ) has biased composition (low complexity). Residues 42–67 (SQTQTQGHTQSQLDNQLNGPDDGLHN) are disordered. Positions 96–254 (TKDLPVHACR…NKLEELWKDN (159 aa)) constitute a Upf1 CH-rich domain. C104, C108, C119, S122, C127, H137, H141, C147, C165, C168, C191, and C195 together coordinate Zn(2+). A C3H region spans residues 104 to 137 (CRSYCGIHDPACVVYCNTSKKWFCNGRGNTSGSH). The CC/SHH/C stretch occupies residues 119–147 (CNTSKKWFCNGRGNTSGSHIVNHLVRAKC). The interval 165–195 (CYNCGCRNVFLLGFIPAKADSVVVLLCRQPC) is C4. ATP-binding positions include Q457, 474–481 (GPPGTGKT), Y683, and E813. The disordered stretch occupies residues 977–998 (QGQTNGPAAGRGAMKGKSGRGG).

This sequence belongs to the DNA2/NAM7 helicase family.

The protein localises to the cytoplasm. Its subcellular location is the P-body. The enzyme catalyses ATP + H2O = ADP + phosphate + H(+). Its function is as follows. RNA-dependent helicase required for nonsense-mediated decay (NMD) of aberrant mRNAs containing premature stop codons and modulates the expression level of normal mRNAs. The formation of an rent1-rent2-rent3 surveillance complex is believed to activate NMD. This Takifugu rubripes (Japanese pufferfish) protein is Putative regulator of nonsense transcripts 1 (rent1).